The chain runs to 206 residues: MAIVTVYNQQKEETGKINLSSKIFEVQVQPEILHLVVRAQLAAKRAGTHSVKTRGHVSGGGAKPWRQKGTGRARAGSNRSPLWRGGGIVFGPQPRDYSFKVNKKIRSLALCMALSSRFAEENLIVIDNIVLPEIKTKHFVGVANILGLHKALIVAPVESTQLLLSMRNVPNVKLLTYDRLNVYDILKYKQLVLLEGAVQHIEARLK.

The interval 48-78 is disordered; that stretch reads THSVKTRGHVSGGGAKPWRQKGTGRARAGSN.

It belongs to the universal ribosomal protein uL4 family. In terms of assembly, part of the 50S ribosomal subunit.

One of the primary rRNA binding proteins, this protein initially binds near the 5'-end of the 23S rRNA. It is important during the early stages of 50S assembly. It makes multiple contacts with different domains of the 23S rRNA in the assembled 50S subunit and ribosome. In terms of biological role, forms part of the polypeptide exit tunnel. The sequence is that of Large ribosomal subunit protein uL4 from Lawsonia intracellularis (strain PHE/MN1-00).